The primary structure comprises 155 residues: Putative pre-16S rRNA nuclease (155 aa).

This sequence belongs to the YqgF nuclease family.

It is found in the cytoplasm. Could be a nuclease involved in processing of the 5'-end of pre-16S rRNA. The sequence is that of Putative pre-16S rRNA nuclease from Xylella fastidiosa (strain M23).